A 1395-amino-acid chain; its full sequence is uncharacterized protein (1395 aa).

89 to 96 (AYKKWGKS) provides a ligand contact to ATP. Disordered stretches follow at residues 146 to 166 (EEKI…LSPP) and 205 to 391 (SSSS…MENR). Low complexity-rich tracts occupy residues 155-166 (GSPSPEAELSPP) and 205-222 (SSSS…TSSP). The segment covering 230-269 (EVTKERSSEVPTTVHEKTQSKSKNEKENKFSNGTIEEKPA) has biased composition (basic and acidic residues). Positions 287–301 (SWSSGSSEAGSSSSG) are enriched in low complexity. A compositionally biased stretch (basic residues) spans 313-328 (VKVRHKAREIRNKKGR). A compositionally biased stretch (basic and acidic residues) spans 337–346 (KHGEKAERNI). Low complexity predominate over residues 349–358 (GSSSSSSSGS). The segment covering 369-391 (PLKEIGRKDPGSTEGKDLYMENR) has biased composition (basic and acidic residues). Phosphoserine is present on residues S814 and S1080. The segment at 1110-1132 (PISASELSPGGGSESEFESEKDE) is disordered. S1194 and S1338 each carry phosphoserine. Over residues 1346-1359 (TGERDSGAKSDGFR) the composition is skewed to basic and acidic residues. Residues 1346–1395 (TGERDSGAKSDGFRGKMCSSASSTSEETGSEGGGEWVGPSEEELFSRTHL) are disordered.

This is an uncharacterized protein from Homo sapiens (Human).